A 337-amino-acid chain; its full sequence is UDP-3-O-acylglucosamine N-acyltransferase (337 aa).

The active-site Proton acceptor is histidine 238.

Belongs to the transferase hexapeptide repeat family. LpxD subfamily. Homotrimer.

The enzyme catalyses a UDP-3-O-[(3R)-3-hydroxyacyl]-alpha-D-glucosamine + a (3R)-hydroxyacyl-[ACP] = a UDP-2-N,3-O-bis[(3R)-3-hydroxyacyl]-alpha-D-glucosamine + holo-[ACP] + H(+). The protein operates within bacterial outer membrane biogenesis; LPS lipid A biosynthesis. Catalyzes the N-acylation of UDP-3-O-acylglucosamine using 3-hydroxyacyl-ACP as the acyl donor. Is involved in the biosynthesis of lipid A, a phosphorylated glycolipid that anchors the lipopolysaccharide to the outer membrane of the cell. This Xanthomonas oryzae pv. oryzae (strain KACC10331 / KXO85) protein is UDP-3-O-acylglucosamine N-acyltransferase.